A 582-amino-acid chain; its full sequence is Potassium voltage-gated channel subfamily KQT member 1 (582 aa).

Residues 1-31 (RVSIYSARRPLLARTHIQGRVYNFLERPTGW) lie on the Cytoplasmic side of the membrane. A helical membrane pass occupies residues 32–53 (KCFVYHFAVFLIVLVCLIFSVL). Residues 54–64 (STIEQYVALAT) are Extracellular-facing. Residues 65–87 (GTLFWMEIVLVVFFGTEYVVRLW) form a helical membrane-spanning segment. Residues 88–103 (SAGCRSKYVGVWGRLR) are Cytoplasmic-facing. A helical membrane pass occupies residues 104–129 (FARKPISIIDLIVVLASMVVLCVGSK). Topologically, residues 130–137 (GQVFATSA) are extracellular. The chain crosses the membrane as a helical; Voltage-sensor span at residues 138–153 (IRGIRFLQILRMLHVD). An interaction with KCNE3 region spans residues 149–157 (MLHVDRQGG). Residues 154–171 (RQGGTWRLLGSVVFIHRQ) lie on the Cytoplasmic side of the membrane. Gln-155 lines the a 1,2-diacyl-sn-glycero-3-phospho-(1D-myo-inositol-4,5-bisphosphate) pocket. A helical transmembrane segment spans residues 172 to 194 (ELITTLYIGFLGLIFSSYFVYLA). At 195–210 (EKDAVNESGQVEFGSY) the chain is on the extracellular side. An N-linked (GlcNAc...) asparagine glycan is attached at Asn-200. An intramembrane region (pore-forming) is located at residues 211–231 (ADALWWGVVTVTTIGYGDKVP). The Extracellular portion of the chain corresponds to 232 to 233 (QT). Residues 234 to 259 (WVGKTIASCFSVFAISFFALPAGILG) traverse the membrane as a helical segment. At 260–582 (SGFALKVQQK…VPRRGPEEGS (323 aa)) the chain is on the cytoplasmic side. An interaction with CALM region spans residues 281 to 293 (AAASLIQTAWRCY). Ser-318 and Ser-320 each carry phosphoserine. Residues 426 to 440 (KVIRRMQYFVAKKKF) form an interaction with CALM; calcium-dependent region. The tract at residues 446–483 (PYDVRDVIEQYSQGHLNLMVRIKELQRRLDQSIGKPSL) is interaction with KCNE1 C-terminus. The stretch at 496-532 (SNTIGARLNRVEDKVAQLDQRLVLITDMLQQLLSLHH) forms a coiled coil. The interval 499 to 527 (IGARLNRVEDKVAQLDQRLVLITDMLQQL) is interaction with AKAP9. A C-terminal assembly domain (tetramerization) region spans residues 500-531 (GARLNRVEDKVAQLDQRLVLITDMLQQLLSLH). A disordered region spans residues 530-582 (LHHGGPPGSRPPSGGGAQVQPCGPTNPELFLPGNALPTYEQLTVPRRGPEEGS).

It belongs to the potassium channel family. KQT (TC 1.A.1.15) subfamily. Kv7.1/KCNQ1 sub-subfamily. As to quaternary structure, tetramer. Heterotetramer with KCNE1; targets to the membrane raft. Interacts (via C-terminus) with CALM; forms a heterooctameric structure (with 4:4 KCNQ1:CALM stoichiometry) in a calcium-independent manner. Interacts with AKAP9; targets protein kinase A (PKA) catalytic and regulatory subunits and protein phosphatase 1 (PP1) to the KCNQ1-KCNE1 complex, allowing PKA-mediated phosphorylation and increase of delayed rectifier potassium channel activity. Interacts with KCNE2; form a heterooligomer complex that targets to the membrane raft and leading to currents with an apparently instantaneous activation, a rapid deactivation process and a linear current-voltage relationship and decreases the amplitude of the outward current. Interacts with AP2M1; mediates estrogen-induced internalization via clathrin-coated vesicles. Interacts with NEDD4L; promotes internalization and decreases I(Ks) currents. Interacts with USP2; counteracts the NEDD4L-specific down-regulation of I(Ks) and restore plasma membrane localization. Heterotetramer with KCNQ5; has a voltage-gated potassium channel activity. Interacts with KCNE3; four KCNE3 molecules are bound to one KCNQ1 tetramer (4:4 KCNQ1:KCNE3 stoichiometry); alters membrane raft localization; affects KCNQ1 structure and gating properties. Interacts with KCNE4; impairs KCNQ1 localization in lipid rafts and inhibits voltage-gated potassium channel activity. Interacts with KCNE5; impairs KCNQ1 localization in lipid rafts and only conducts current upon strong and continued depolarization. In terms of processing, phosphorylated by PKA; increases delayed rectifier potassium channel activity of the KCNQ1-KCNE1 complex through a macromolecular complex that includes PKA, PP1, and the targeting protein AKAP9. Post-translationally, ubiquitinated by NEDD4L; promotes internalization. The ubiquitinylated form is internalized through a clathrin-mediated endocytosis by interacting with AP2M1 and is recycled back to the cell membrane via RAB4A and RAB11A. Deubiquitinated by USP2; counteracts the NEDD4L-specific down-regulation of I(Ks) and restores the membrane localization.

The protein resides in the cell membrane. The protein localises to the cytoplasmic vesicle membrane. It localises to the early endosome. It is found in the membrane raft. Its subcellular location is the endoplasmic reticulum. The protein resides in the basolateral cell membrane. The catalysed reaction is K(+)(in) = K(+)(out). With respect to regulation, PIP2 molecule is essential to activate KCNQ channels by inducing the coupling of the voltage-sensing domain (VSD) and the pore-forming domain (PD). Upon channel activation, PIP2 disrupts the VSD-calmodulin/CALM interactions, causing the release of CALM from the VSD which triggers the opening of the gate. Calcium potentiates KCNQ1 channel current through calcium-bound CALM. Calcium-bound CALM competes with PIP2 to stabilize the channel open state. Pore-forming subunit of the voltage-gated potassium (Kv) channel involved in the regulation of cardiomyocyte excitability and important in normal development and functions of myocardium, inner ear, stomach and colon. Associates with KCNE beta subunits that modulates current kinetics. Induces a voltage-dependent by rapidly activating and slowly deactivating potassium-selective outward current. Also promotes a delayed voltage activated potassium current showing outward rectification characteristic. During beta-adrenergic receptor stimulation participates in cardiac repolarization by associating with KCNE1 to form the I(Ks) cardiac potassium current that increases the amplitude and slows down the activation kinetics of outward potassium current I(Ks). Muscarinic agonist oxotremorine-M strongly suppresses KCNQ1/KCNE1 current. When associated with KCNE3, forms the potassium channel that is important for cyclic AMP-stimulated intestinal secretion of chloride ions. This interaction with KCNE3 is reduced by 17beta-estradiol, resulting in the reduction of currents. During conditions of increased substrate load, maintains the driving force for proximal tubular and intestinal sodium ions absorption, gastric acid secretion, and cAMP-induced jejunal chloride ions secretion. Allows the provision of potassium ions to the luminal membrane of the secretory canaliculus in the resting state as well as during stimulated acid secretion. When associated with KCNE2, forms a heterooligomer complex leading to currents with an apparently instantaneous activation, a rapid deactivation process and a linear current-voltage relationship and decreases the amplitude of the outward current. When associated with KCNE4, inhibits voltage-gated potassium channel activity. When associated with KCNE5, this complex only conducts current upon strong and continued depolarization. Also forms a heterotetramer with KCNQ5 that has a voltage-gated potassium channel activity. Binds with phosphatidylinositol 4,5-bisphosphate. This chain is Potassium voltage-gated channel subfamily KQT member 1, found in Felis catus (Cat).